The primary structure comprises 215 residues: Cytochrome b6 (215 aa).

Residues Ile32–Phe52 form a helical membrane-spanning segment. Cys35 is a heme c binding site. Heme b-binding residues include His86 and His100. Transmembrane regions (helical) follow at residues Ala90–Phe110, Leu116–Tyr136, and Leu186–Ile206. Residues His187 and His202 each coordinate heme b.

The protein belongs to the cytochrome b family. PetB subfamily. In terms of assembly, the 4 large subunits of the cytochrome b6-f complex are cytochrome b6, subunit IV (17 kDa polypeptide, PetD), cytochrome f and the Rieske protein, while the 4 small subunits are PetG, PetL, PetM and PetN. The complex functions as a dimer. Requires heme b as cofactor. It depends on heme c as a cofactor.

The protein resides in the plastid. It localises to the chloroplast thylakoid membrane. In terms of biological role, component of the cytochrome b6-f complex, which mediates electron transfer between photosystem II (PSII) and photosystem I (PSI), cyclic electron flow around PSI, and state transitions. The sequence is that of Cytochrome b6 from Phalaenopsis aphrodite subsp. formosana (Moth orchid).